Reading from the N-terminus, the 1872-residue chain is Plexin-A3 (1872 aa).

Positions 1–19 are cleaved as a signal peptide; the sequence is MPTVCLLPLLFFTIGGCLG. One can recognise a Sema domain in the interval 20–489; that stretch reads SSRPFRTFVV…SEKQVSQLPV (470 aa). Residues 20–1220 lie on the Extracellular side of the membrane; that stretch reads SSRPFRTFVV…ITADRALTLP (1201 aa). N60 carries N-linked (GlcNAc...) asparagine glycosylation. 9 cysteine pairs are disulfide-bonded: C78-C87, C113-C121, C267-C388, C283-C339, C357-C376, C492-C509, C498-C540, C501-C518, and C512-C524. N-linked (GlcNAc...) asparagine glycosylation occurs at N549. C575 and C595 are joined by a disulfide. IPT/TIG domains follow at residues 841 to 934, 936 to 1021, 1024 to 1123, and 1126 to 1212; these read PRIT…YSFV, PTFD…YTYT, PTVT…FTYY, and PSFE…LHIT. N-linked (GlcNAc...) asparagine glycosylation occurs at N1163. The helical transmembrane segment at 1221 to 1241 threads the bilayer; that stretch reads AMVGLAAGGGLLLLAITVVLV. Residues 1240–1294 adopt a coiled-coil conformation; sequence LVAYKRKTQDADRTLKRLQLQMDNLESRVALECKEAFAELQTDINELTNHMDGVQ. Over 1242 to 1872 the chain is Cytoplasmic; sequence AYKRKTQDAD…QIITLVSSSS (631 aa). Position 1597 is a phosphoserine (S1597).

This sequence belongs to the plexin family. As to expression, detected in embryonic hindbrain, spinal cord, dorsal root ganglion, trigeminal ganglion and superior cervical ganglion. In newborns, detected throughout all layers of the hippocampus.

The protein resides in the cell membrane. Its function is as follows. Coreceptor for SEMA3A and SEMA3F. Necessary for signaling by class 3 semaphorins and subsequent remodeling of the cytoskeleton. Plays a role in axon guidance in the developing nervous system. Regulates the migration of sympathetic neurons, but not of neural crest precursors. Required for normal dendrite spine morphology in pyramidal neurons. May play a role in regulating semaphorin-mediated programmed cell death in the developing nervous system. Class 3 semaphorins bind to a complex composed of a neuropilin and a plexin. The plexin modulates the affinity of the complex for specific semaphorins, and its cytoplasmic domain is required for the activation of down-stream signaling events in the cytoplasm. The chain is Plexin-A3 (Plxna3) from Mus musculus (Mouse).